A 430-amino-acid polypeptide reads, in one-letter code: Dolichyl-diphosphooligosaccharide--protein glycosyltransferase subunit WBP1 (430 aa).

The N-terminal stretch at 1–20 is a signal peptide; the sequence is MRTDWNFFFCILLQAIFVVG. Over 24–393 the chain is Lumenal; it reads SRTLVLYDQS…PRSWEISNSW (370 aa). Residues Asn-60 and Asn-332 are each glycosylated (N-linked (GlcNAc...) asparagine). The helical transmembrane segment at 394–414 threads the bilayer; the sequence is VYISAICGVIVAWIFFVVSFV. Over 415–430 the chain is Cytoplasmic; the sequence is TTSSVGKKLETFKKTN.

It belongs to the DDOST 48 kDa subunit family. Component of the oligosaccharyltransferase (OST) complex, which appears to exist in two assemblies comprising OST1, OST2, OST4, OST5, STT3, SWP1, WPB1, and either OST3 or OST6. OST assembly occurs through the formation of 3 subcomplexes. Subcomplex 1 contains OST1 and OST5, subcomplex 2 contains STT3, OST3, and OST4, and subcomplex 3 contains OST2, WBP1, and SWP1. Interacts with SEC61, SBH1 and SSS1.

It is found in the endoplasmic reticulum membrane. It functions in the pathway protein modification; protein glycosylation. Functionally, subunit of the oligosaccharyl transferase (OST) complex that catalyzes the initial transfer of a defined glycan (Glc(3)Man(9)GlcNAc(2) in eukaryotes) from the lipid carrier dolichol-pyrophosphate to an asparagine residue within an Asn-X-Ser/Thr consensus motif in nascent polypeptide chains, the first step in protein N-glycosylation. N-glycosylation occurs cotranslationally and the complex associates with the Sec61 complex at the channel-forming translocon complex that mediates protein translocation across the endoplasmic reticulum (ER). All subunits are required for a maximal enzyme activity. The chain is Dolichyl-diphosphooligosaccharide--protein glycosyltransferase subunit WBP1 (WBP1) from Saccharomyces cerevisiae (strain ATCC 204508 / S288c) (Baker's yeast).